The sequence spans 557 residues: DNA replication factor Cdt1 (557 aa).

The PIP-box K+4 motif signature appears at 1–25 (MAQSRVTDFYACRRPGLTTPRAKSI). Residues 20–113 (PRAKSICLTP…VCPSPVKRTK (94 aa)) form a disordered region. Thr-28 carries the phosphothreonine; by MAPK8 modification. Phosphoserine is present on Ser-30. A Cyclin-binding motif motif is present at residues 65 to 67 (RRL). Low complexity predominate over residues 69 to 81 (LPGLDSCPSSLPE). Positions 82–106 (PSSPAEPSPPADPSPPADPGSPVCP) are enriched in pro residues. Phosphoserine; by MAPK8 is present on Ser-107. Positions 163–203 (PSTPDAKVPTEQPCVEKAPAYQRFHALAQPGLPGLVLPYKY) are interaction with GMNN. A Phosphoserine modification is found at Ser-392. The disordered stretch occupies residues 397-427 (RSAEPGSPGTSTPPLPATPPATPPAASPSAL). The span at 407–422 (STPPLPATPPATPPAA) shows a compositional bias: pro residues. Positions 463 to 557 (LERLPELARV…LAHHVHAEGL (95 aa)) are interaction with LRWD1.

This sequence belongs to the Cdt1 family. In terms of assembly, interacts with GMNN; the interaction inhibits the binding of the MCM complex to origins of replication. Interacts with MCM6. Interacts with CDC6; are mutually dependent on one another for loading MCM complexes onto chromatin. Interacts with PCNA. Interacts with LRWD1 during G1 phase and during mitosis. Interacts with NDC80 subunit of the NDC80 complex; leading to kinetochore localization. Interacts with KAT7. Interacts with ubiquitin-binding protein FAF1; the interaction is likely to promote CDT1 degradation. In terms of processing, two independent E3 ubiquitin ligase complexes, SCF(SKP2) and the DCX(DTL) complex, mediated CDT1 degradation in S phase. Ubiquitinated by the DCX(DTL) complex, in response to DNA damage, leading to its degradation. Ubiquitination by the DCX(DTL) complex is necessary to ensure proper cell cycle regulation and is PCNA-dependent: interacts with PCNA via its PIP-box, while the presence of the containing the 'K+4' motif in the PIP box, recruit the DCX(DTL) complex, leading to its degradation. Phosphorylation at Thr-28 by CDK2 targets CDT1 for ubiquitynation by SCF(SKP2) E3 ubiquitin ligase and subsequent degradation. The interaction with GMNN protects it against ubiquitination. Deubiquitinated by USP37. Ubiquitinated and degraded by the SCF(FBXO31) complex during the G2 phase to prevent re-replication. Phosphorylation by cyclin A-dependent kinases at Thr-28 targets CDT1 for ubiquitynation by SCF(SKP2) E3 ubiquitin ligase and subsequent degradation. Phosphorylated at Thr-28 by MAPK8/JNK1, which blocks replication licensing in response to stress. Binding to GMNN is not affected by phosphorylation.

The protein resides in the nucleus. Its subcellular location is the chromosome. It is found in the centromere. The protein localises to the kinetochore. Its function is as follows. Required for both DNA replication and mitosis. DNA replication licensing factor, required for pre-replication complex assembly. Cooperates with CDC6 and the origin recognition complex (ORC) during G1 phase of the cell cycle to promote the loading of the mini-chromosome maintenance (MCM) complex onto DNA to generate pre-replication complexes (pre-RC). Required also for mitosis by promoting stable kinetochore-microtubule attachments. Potential oncogene. This is DNA replication factor Cdt1 from Mus musculus (Mouse).